The primary structure comprises 491 residues: Glucose-6-phosphate 1-dehydrogenase (491 aa).

Positions 51 and 150 each coordinate NADP(+). H180, K184, E218, and D237 together coordinate substrate. The active-site Proton acceptor is H242. K341 is a binding site for substrate.

It belongs to the glucose-6-phosphate dehydrogenase family.

The enzyme catalyses D-glucose 6-phosphate + NADP(+) = 6-phospho-D-glucono-1,5-lactone + NADPH + H(+). It functions in the pathway carbohydrate degradation; pentose phosphate pathway; D-ribulose 5-phosphate from D-glucose 6-phosphate (oxidative stage): step 1/3. Its function is as follows. Catalyzes the oxidation of glucose 6-phosphate to 6-phosphogluconolactone. The sequence is that of Glucose-6-phosphate 1-dehydrogenase from Rhizobium meliloti (strain 1021) (Ensifer meliloti).